Consider the following 328-residue polypeptide: MTEILPHVNDEVLPAEYELNQPEPEHCPGPESDMAGKSDACGGCANKEICESLPKGPDPDIPLITDNLSGIEHKILVLSGKGGVGKSTFAAMLSWALSADEDLQVGAMDLDICGPSLPHMLGCIKETVHESNSGWTPVYVTDNLATMSIQYMLPEDDSAIIWRGSKKNLLIKKFLKDVDWDKLDYLVIDTPPGTSDEHISINKYMRESGIDGALVVTTPQEVALLDVRKEIDFCKKAGINILGLVENMSGFVCPNCKGESQIFKATTGGGEALCKELGIKFLGSVPLDPRIGKSCDMGESFLDNYPDSPASSAVLNVVEALRDAVGDV.

Positions 27, 41, 44, and 50 each coordinate [4Fe-4S] cluster. Residue 80 to 87 (GKGGVGKS) participates in ATP binding. The [4Fe-4S] cluster site is built by cysteine 253 and cysteine 256.

It belongs to the Mrp/NBP35 ATP-binding proteins family. NUBP1/NBP35 subfamily. Heterotetramer of 2 NBP35 and 2 CFD1 chains. [4Fe-4S] cluster is required as a cofactor.

It is found in the cytoplasm. It localises to the nucleus. Component of the cytosolic iron-sulfur (Fe/S) protein assembly (CIA) machinery. Required for maturation of extramitochondrial Fe-S proteins. The NBP35-CFD1 heterotetramer forms a Fe-S scaffold complex, mediating the de novo assembly of an Fe-S cluster and its transfer to target apoproteins. Required for biogenesis and export of both ribosomal subunits, which may reflect a role in assembly of the Fe/S clusters in RLI1, a protein which performs rRNA processing and ribosome export. The polypeptide is Cytosolic Fe-S cluster assembly factor NBP35 (Saccharomyces cerevisiae (strain ATCC 204508 / S288c) (Baker's yeast)).